The sequence spans 353 residues: tRNA-specific 2-thiouridylase MnmA (353 aa).

ATP contacts are provided by residues 6–13 and Leu-32; that span reads GMSGGVDS. Cys-99 (nucleophile) is an active-site residue. A disulfide bridge links Cys-99 with Cys-197. An ATP-binding site is contributed by Gly-124. The segment at 147 to 149 is interaction with tRNA; that stretch reads KDQ. Cys-197 (cysteine persulfide intermediate) is an active-site residue. The tract at residues 303-304 is interaction with tRNA; sequence RY.

This sequence belongs to the MnmA/TRMU family.

The protein localises to the cytoplasm. It carries out the reaction S-sulfanyl-L-cysteinyl-[protein] + uridine(34) in tRNA + AH2 + ATP = 2-thiouridine(34) in tRNA + L-cysteinyl-[protein] + A + AMP + diphosphate + H(+). Functionally, catalyzes the 2-thiolation of uridine at the wobble position (U34) of tRNA, leading to the formation of s(2)U34. This is tRNA-specific 2-thiouridylase MnmA from Persephonella marina (strain DSM 14350 / EX-H1).